Consider the following 310-residue polypeptide: Delta(1)-pyrroline-2-carboxylate reductase 1 (310 aa).

It belongs to the ornithine cyclodeaminase/mu-crystallin family.

It carries out the reaction L-proline + NAD(+) = 1-pyrroline-2-carboxylate + NADH + H(+). The catalysed reaction is L-proline + NADP(+) = 1-pyrroline-2-carboxylate + NADPH + H(+). Catalyzes the reduction of Delta(1)-pyrroline-2-carboxylate (Pyr2C) to L-proline, using NADPH as the electron donor. May be involved in a degradation pathway that converts trans-3-hydroxy-L-proline (t3LHyp) to L-proline. In Burkholderia multivorans (strain ATCC 17616 / 249), this protein is Delta(1)-pyrroline-2-carboxylate reductase 1.